Consider the following 341-residue polypeptide: Phosphoribosylformylglycinamidine cyclo-ligase (341 aa).

It belongs to the AIR synthase family.

It localises to the cytoplasm. The catalysed reaction is 2-formamido-N(1)-(5-O-phospho-beta-D-ribosyl)acetamidine + ATP = 5-amino-1-(5-phospho-beta-D-ribosyl)imidazole + ADP + phosphate + H(+). Its pathway is purine metabolism; IMP biosynthesis via de novo pathway; 5-amino-1-(5-phospho-D-ribosyl)imidazole from N(2)-formyl-N(1)-(5-phospho-D-ribosyl)glycinamide: step 2/2. The polypeptide is Phosphoribosylformylglycinamidine cyclo-ligase (Picosynechococcus sp. (strain ATCC 27264 / PCC 7002 / PR-6) (Agmenellum quadruplicatum)).